An 85-amino-acid chain; its full sequence is U4-theraphotoxin-Hhn1a (85 aa).

Residues 1 to 22 (MKVTLIAILTCAAVLVLHTTAE) form the signal peptide. The propeptide occupies 23–48 (EELEAESQLMEVGMPDTELAAVDEER). Disulfide bonds link Cys52–Cys66, Cys56–Cys77, and Cys71–Cys82.

This sequence belongs to the neurotoxin 12 (Hwtx-2) family. 02 (Hwtx-2) subfamily. As to quaternary structure, monomer. Expressed by the venom gland.

The protein resides in the secreted. Functionally, neurotoxin active on both insects and mammals. The chain is U4-theraphotoxin-Hhn1a from Cyriopagopus hainanus (Chinese bird spider).